The primary structure comprises 643 residues: Threonine--tRNA ligase (643 aa).

Positions 1-61 constitute a TGS domain; it reads MPIITLPDGS…SEDSSLEIIT (61 aa). The segment at 243 to 534 is catalytic; that stretch reads DHRRIGKALD…ITEEYAGFFP (292 aa). Zn(2+)-binding residues include cysteine 334, histidine 385, and histidine 511.

It belongs to the class-II aminoacyl-tRNA synthetase family. As to quaternary structure, homodimer. It depends on Zn(2+) as a cofactor.

The protein resides in the cytoplasm. It catalyses the reaction tRNA(Thr) + L-threonine + ATP = L-threonyl-tRNA(Thr) + AMP + diphosphate + H(+). Its function is as follows. Catalyzes the attachment of threonine to tRNA(Thr) in a two-step reaction: L-threonine is first activated by ATP to form Thr-AMP and then transferred to the acceptor end of tRNA(Thr). Also edits incorrectly charged L-seryl-tRNA(Thr). The chain is Threonine--tRNA ligase from Actinobacillus pleuropneumoniae serotype 7 (strain AP76).